Consider the following 217-residue polypeptide: Protein canopy 4 (217 aa).

Positions 1–27 (MEMFTVFLFYMFSLVLANQEERLPNKC) are cleaved as a signal peptide. 3 disulfides stabilise this stretch: C27-C185, C30-C173, and C83-C145. Positions 194 to 217 (MGMKGSEEESEGKDGKETHDAGEL) are disordered. The segment covering 205 to 217 (GKDGKETHDAGEL) has biased composition (basic and acidic residues).

Belongs to the canopy family.

The protein localises to the secreted. This Danio rerio (Zebrafish) protein is Protein canopy 4 (cnpy4).